Consider the following 1269-residue polypeptide: DNA-directed RNA polymerase subunit beta (1269 aa).

The protein belongs to the RNA polymerase beta chain family. In terms of assembly, the RNAP catalytic core consists of 2 alpha, 1 beta, 1 beta' and 1 omega subunit. When a sigma factor is associated with the core the holoenzyme is formed, which can initiate transcription.

The enzyme catalyses RNA(n) + a ribonucleoside 5'-triphosphate = RNA(n+1) + diphosphate. In terms of biological role, DNA-dependent RNA polymerase catalyzes the transcription of DNA into RNA using the four ribonucleoside triphosphates as substrates. The polypeptide is DNA-directed RNA polymerase subunit beta (Porphyromonas gingivalis (strain ATCC 33277 / DSM 20709 / CIP 103683 / JCM 12257 / NCTC 11834 / 2561)).